The following is a 165-amino-acid chain: 3-hydroxyacyl-[acyl-carrier-protein] dehydratase FabZ (165 aa).

H68 is a catalytic residue.

It belongs to the thioester dehydratase family. FabZ subfamily.

The protein localises to the cytoplasm. It catalyses the reaction a (3R)-hydroxyacyl-[ACP] = a (2E)-enoyl-[ACP] + H2O. In terms of biological role, involved in unsaturated fatty acids biosynthesis. Catalyzes the dehydration of short chain beta-hydroxyacyl-ACPs and long chain saturated and unsaturated beta-hydroxyacyl-ACPs. The protein is 3-hydroxyacyl-[acyl-carrier-protein] dehydratase FabZ of Methylobacterium sp. (strain 4-46).